The sequence spans 99 residues: UPF0122 protein UU142 (99 aa).

Belongs to the UPF0122 family.

Its function is as follows. Might take part in the signal recognition particle (SRP) pathway. This is inferred from the conservation of its genetic proximity to ftsY/ffh. May be a regulatory protein. The protein is UPF0122 protein UU142 of Ureaplasma parvum serovar 3 (strain ATCC 700970).